A 638-amino-acid chain; its full sequence is MAAAADLVVPTLAIRSSVAVELWSSAGSKQPFEHKPHLPREETKSSRSICFSSNGRYFAYSNGQEVKVLQASRDSAASWPVICVLPRPKAFYLQFSPRGSYLCTWEHYAITKDRPEGSPNLLVYEVATGVEVFAIVQKNQADWQPSWSADESIFALVVGGEALFYDLGEGAEKGFATTSRKIGGSRGGMLSLGPGNCPPFLAFYTPGAKGAPSMCKLYKYPALGQNQTVACKSFFQADRVEMLWNKRGSGLLLLTSTEVDKSGASYYGNQAVHFMATKGDTCSVPLSKEGPVHCVKWSPKATEFVVVYGFMPSKAALYNLKCDVVFDFGEGPRNCAYFNPFGNLIALAGFGNLPGAVEVWDVSKREKLANLKCADTTVFEWHPNGEWFVTATTAPRLRISNGFKVYHYSGALLHETMWPQGQELLGIEWQQFADKTFSEPKITKAKHEGIKSSQPEASKKAYTPPHLRLLKEGKNPEKYLPQPSIPGLAPTAAAGGVNGNKRNNKNKQRSARKDVNVVNGGDADSAPTEVVDQAAPVARQSPVFVAAEERKPQHTPRQKYQPDNAADQPPNSYGQGHPNGQHISDKERKIRSVAKKLSDIKKLKVRRSQGENLELNQLNKIKMEAQYLDELKALKQSA.

WD repeat units lie at residues 287–329 and 331–370; these read SKEG…FDFG and GPRN…KLAN. Residues 441–450 show a composition bias toward basic and acidic residues; the sequence is KITKAKHEGI. Positions 441 to 593 are disordered; sequence KITKAKHEGI…SDKERKIRSV (153 aa). Thr463 is subject to Phosphothreonine. The segment covering 492–501 has biased composition (low complexity); the sequence is AAAGGVNGNK. The segment covering 583-593 has biased composition (basic and acidic residues); that stretch reads ISDKERKIRSV.

Belongs to the WD repeat EIF2A family.

Functions in the early steps of protein synthesis of a small number of specific mRNAs. Acts by directing the binding of methionyl-tRNAi to 40S ribosomal subunits. In contrast to the eIF-2 complex, it binds methionyl-tRNAi to 40S subunits in a codon-dependent manner, whereas the eIF-2 complex binds methionyl-tRNAi to 40S subunits in a GTP-dependent manner. This Drosophila melanogaster (Fruit fly) protein is Eukaryotic translation initiation factor 2A.